The primary structure comprises 315 residues: Ornithine carbamoyltransferase (315 aa).

Carbamoyl phosphate contacts are provided by residues 53–56, Gln80, Arg104, and 131–134; these read STRT and HPCQ. Residues Asn163, Asp227, and 231 to 232 contribute to the L-ornithine site; that span reads SM. Residues 267-268 and Arg295 each bind carbamoyl phosphate; that span reads CL.

The protein belongs to the aspartate/ornithine carbamoyltransferase superfamily. OTCase family.

The protein localises to the cytoplasm. It carries out the reaction carbamoyl phosphate + L-ornithine = L-citrulline + phosphate + H(+). The protein operates within amino-acid degradation; L-arginine degradation via ADI pathway; carbamoyl phosphate from L-arginine: step 2/2. Reversibly catalyzes the transfer of the carbamoyl group from carbamoyl phosphate (CP) to the N(epsilon) atom of ornithine (ORN) to produce L-citrulline. This chain is Ornithine carbamoyltransferase, found in Rhodococcus opacus (strain B4).